The sequence spans 88 residues: MLDTKFDELMEFPCAFPYKVVGDASSTLADRVVEVVQRHVPGDYAPTSKTSSKGTYNSITIRVTVQSKEQVETLYTELAAIEGVKRVL.

This sequence belongs to the UPF0250 family.

This is UPF0250 protein Ssed_3490 from Shewanella sediminis (strain HAW-EB3).